We begin with the raw amino-acid sequence, 758 residues long: Glucocorticoid receptor (758 aa).

Disordered regions lie at residues 1–61 (MDPG…SANG) and 349–382 (GMSS…PSGP). The segment at 1–386 (MDPGGLKHSK…AKPSGPTHKI (386 aa)) is modulating. A compositionally biased stretch (low complexity) spans 26-42 (GSFSGDTGGSKSTTSTS). 2 NR C4-type zinc fingers span residues 387 to 407 (CLVC…CGSC) and 432 to 456 (CAGR…FRKC). The nuclear receptor DNA-binding region spans 387–461 (CLVCSDEASG…RFRKCLQAGM (75 aa)). The segment at 462–498 (NLEARKNKKLIRLKGQQTTMEPNPPPPDERACALIPK) is hinge. The NR LBD domain maps to 499–733 (SMPQLVPTML…FPEMLAEIIS (235 aa)).

This sequence belongs to the nuclear hormone receptor family. NR3 subfamily. In terms of assembly, heteromultimeric cytoplasmic complex with HSP90AA1, HSPA1A/HSPA1B, and FKBP5 or another immunophilin such as PPID, STIP1, or the immunophilin homolog PPP5C. Upon ligand binding FKBP5 dissociates from the complex and FKBP4 takes its place, thereby linking the complex to dynein and mediating transport to the nucleus, where the complex dissociates. Directly interacts with UNC45A. Binds to DNA as a homodimer, and as heterodimer with NR3C2 or the retinoid X receptor. Binds STAT5A and STAT5B homodimers and heterodimers. Interacts with NRIP1, POU2F1, POU2F2 and TRIM28. Interacts with several coactivator complexes, including the SMARCA4 complex, CREBBP/EP300, TADA2L (Ada complex) and p160 coactivators such as NCOA2 and NCOA6. Interaction with BAG1 inhibits transactivation. Interacts with HEXIM1, PELP1 and TGFB1I1. Interacts with NCOA1, NCOA3, SMARCA4, SMARCC1, SMARCD1, and SMARCE1. Post-translationally, phosphorylated in the absence of hormone; becomes hyperphosphorylated in the presence of glucocorticoids. May be dephosphorylated by PPP5C, attenuates NR3C1 action. As to expression, isoform 1 is expressed in all tissues tested including liver, gills, intestine, skeletal muscle, kidney, heart, spleen, stomach, brain, pituitary, ovary, testis, skin and bladder. Isoform 2 is found only in testis.

The protein localises to the cytoplasm. It localises to the nucleus. It is found in the mitochondrion. The protein resides in the cytoskeleton. Its subcellular location is the spindle. The protein localises to the microtubule organizing center. It localises to the centrosome. Receptor for glucocorticoids (GC). Has a dual mode of action: as a transcription factor that binds to glucocorticoid response elements (GRE), both for nuclear and mitochondrial DNA, and as a modulator of other transcription factors. Affects inflammatory responses, cellular proliferation and differentiation in target tissues. Involved in chromatin remodeling. Plays a role in rapid mRNA degradation by binding to the 5' UTR of target mRNAs and interacting with PNRC2 in a ligand-dependent manner which recruits the RNA helicase UPF1 and the mRNA-decapping enzyme DCP1A, leading to RNA decay. Could act as a coactivator for STAT5-dependent transcription upon growth hormone (GH) stimulation and could reveal an essential role of hepatic GR in the control of body growth. Mediates glucocorticoid-induced apoptosis. Promotes accurate chromosome segregation during mitosis. May act as a tumor suppressor. May play a negative role in adipogenesis through the regulation of lipolytic and antilipogenic gene expression. The protein is Glucocorticoid receptor (nr3c1) of Oncorhynchus mykiss (Rainbow trout).